Consider the following 527-residue polypeptide: Putative zinc finger CCCH domain-containing protein 64 (527 aa).

Residues 103 to 127 are disordered; it reads GQLRSTQTTSKRKAASRKGQREQRV. The segment at 213–241 adopts a C3H1-type zinc-finger fold; it reads RPGEPFCRYYMKFGECKHMTFCKYNHPKD.

The protein is Putative zinc finger CCCH domain-containing protein 64 of Oryza sativa subsp. japonica (Rice).